Consider the following 634-residue polypeptide: Protection of telomeres protein 1 (634 aa).

2 DNA-binding regions span residues 33–48 (KPPY…SVVT) and 270–273 (SYGR).

This sequence belongs to the telombin family. As to quaternary structure, homodimer or homooligomer. Component of the shelterin complex (telosome) composed of TERF1, TERF2, TINF2, TERF2IP, ACD and POT1. Binds single-stranded telomeric DNA as a monomer. Associated component of the telomerase holoenzyme complex. Found in a complex with TERF1, TINF2 and TNKS1. Interacts with TNKS1. Forms heterodimers with ACD. Identified in a complex with ACD and single-stranded telomeric DNA. Ubiquitous.

It localises to the nucleus. The protein resides in the chromosome. Its subcellular location is the telomere. Functionally, component of the telomerase ribonucleoprotein (RNP) complex that is essential for the replication of chromosome termini. Is a component of the double-stranded telomeric DNA-binding TRF1 complex which is involved in the regulation of telomere length by cis-inhibition of telomerase. Also acts as a single-stranded telomeric DNA-binding protein and thus may act as a downstream effector of the TRF1 complex and may transduce information about telomere maintenance and/or length to the telomere terminus. Component of the shelterin complex (telosome) that is involved in the regulation of telomere length and protection. Shelterin associates with arrays of double-stranded TTAGGG repeats added by telomerase and protects chromosome ends; without its protective activity, telomeres are no longer hidden from the DNA damage surveillance and chromosome ends are inappropriately processed by DNA repair pathways. Binds to two or more telomeric single-stranded 5'-TTAGGG-3' repeats (G-strand) and with high specificity to a minimal telomeric single-stranded 5'-TAGGGTTAG-3' sequence. Binds telomeric single-stranded sequences internally or at proximity of a 3'-end. Its activity is TERT dependent but it does not increase TERT activity by itself. In contrast, the ACD-POT1 heterodimer enhances telomere elongation by increasing telomerase processivity. This Homo sapiens (Human) protein is Protection of telomeres protein 1 (POT1).